A 294-amino-acid polypeptide reads, in one-letter code: Tetraspanin-15 (294 aa).

Topologically, residues 1 to 23 are cytoplasmic; it reads MPRGDSEQVRYCARFSYLWLKFS. Residues 24–44 traverse the membrane as a helical segment; it reads LIIYSTVFWLIGGLVLSVGIY. At 45–62 the chain is on the extracellular side; the sequence is AEAERQKYKTLESAFLAP. The helical transmembrane segment at 63-83 threads the bilayer; that stretch reads AIILILLGVVMFIVSFIGVLA. Over 84–94 the chain is Cytoplasmic; it reads SLRDNLCLLQS. A helical transmembrane segment spans residues 95–115; sequence FMYILGICLVMELIGGIVALI. Residues 116 to 235 lie on the Extracellular side of the membrane; it reads FRNQTIDFLN…WFMDNYTIMA (120 aa). A glycan (N-linked (GlcNAc...) asparagine) is linked at Asn118. Intrachain disulfides connect Cys154-Cys219, Cys155-Cys185, Cys171-Cys179, and Cys186-Cys198. 2 N-linked (GlcNAc...) asparagine glycosylation sites follow: Asn189 and Asn230. Residues 236 to 256 form a helical membrane-spanning segment; it reads GLLLGILLPQFLGVLLTLLYI. The Cytoplasmic portion of the chain corresponds to 257–294; that stretch reads TRVEDIILEHSVTDGLLGPGAKSRTDTAGTGCCLCYPD.

Belongs to the tetraspanin (TM4SF) family. Interacts with ADAM10; the interaction influences ADAM10 substrate specificity, endocytosis and turnover. Post-translationally, palmitoylated.

The protein localises to the cell membrane. It localises to the late endosome membrane. Functionally, part of TspanC8 subgroup, composed of 6 members that interact with the transmembrane metalloprotease ADAM10. This interaction is required for ADAM10 exit from the endoplasmic reticulum and for enzymatic maturation and trafficking to the cell surface as well as substrate specificity. Different TspanC8/ADAM10 complexes have distinct substrates. Promotes ADAM10-mediated cleavage of CDH2. Negatively regulates ligand-induced Notch activity probably by regulating ADAM10 activity. This chain is Tetraspanin-15 (Tspan15), found in Mus musculus (Mouse).